The primary structure comprises 119 residues: Large ribosomal subunit protein uL22 (119 aa).

Belongs to the universal ribosomal protein uL22 family. Part of the 50S ribosomal subunit.

Functionally, this protein binds specifically to 23S rRNA; its binding is stimulated by other ribosomal proteins, e.g. L4, L17, and L20. It is important during the early stages of 50S assembly. It makes multiple contacts with different domains of the 23S rRNA in the assembled 50S subunit and ribosome. Its function is as follows. The globular domain of the protein is located near the polypeptide exit tunnel on the outside of the subunit, while an extended beta-hairpin is found that lines the wall of the exit tunnel in the center of the 70S ribosome. In Chlorobium phaeobacteroides (strain DSM 266 / SMG 266 / 2430), this protein is Large ribosomal subunit protein uL22.